The chain runs to 230 residues: Ion-translocating oxidoreductase complex subunit E (230 aa).

A run of 5 helical transmembrane segments spans residues 39–59 (LGLGIATLLVLVGSNVTVSLV), 69–89 (IPVFVMIIASLVTCVQLLMNA), 93–113 (GLYLSLGIFIPLIVTNCIIIG), 124–144 (VLPAALDGFWMGLGMTSVLVV), and 182–202 (AFLLALLPPGAFIGVGFLIAA).

It belongs to the NqrDE/RnfAE family. The complex is composed of six subunits: RnfA, RnfB, RnfC, RnfD, RnfE and RnfG.

It localises to the cell inner membrane. Part of a membrane-bound complex that couples electron transfer with translocation of ions across the membrane. The polypeptide is Ion-translocating oxidoreductase complex subunit E (Vibrio cholerae serotype O1 (strain ATCC 39315 / El Tor Inaba N16961)).